The chain runs to 75 residues: Brevinin-2SN1 (75 aa).

Residues 1–22 (MFTMKKPLLFLFFLGTISLSFC) form the signal peptide. A propeptide spans 23–40 (EEERGADEDDEVEMTEEE) (removed in mature form). A disulfide bond links Cys-69 and Cys-75.

It belongs to the frog skin active peptide (FSAP) family. Brevinin subfamily. Expressed by the skin glands.

It is found in the secreted. In terms of biological role, antimicrobial peptide. Active against some Gram-negative and a variety of Gram-positive bacterial strains. Active against fungus C.glabrata 090902 but not against C.albicans ATCC 10231. Shows hemolytic activity against human erythrocytes. The chain is Brevinin-2SN1 from Sylvirana spinulosa (Fine-spined frog).